Here is a 192-residue protein sequence, read N- to C-terminus: UPF0149 protein YE3397 (192 aa).

It belongs to the UPF0149 family.

This Yersinia enterocolitica serotype O:8 / biotype 1B (strain NCTC 13174 / 8081) protein is UPF0149 protein YE3397.